Consider the following 482-residue polypeptide: Glutamate--tRNA ligase (482 aa).

The 'HIGH' region motif lies at 9–19; that stretch reads PSPTGYLHIGG. The short motif at 252 to 256 is the 'KMSKS' region element; that stretch reads KLSKR. Residue Lys-255 participates in ATP binding.

This sequence belongs to the class-I aminoacyl-tRNA synthetase family. Glutamate--tRNA ligase type 1 subfamily. Monomer.

The protein resides in the cytoplasm. It catalyses the reaction tRNA(Glu) + L-glutamate + ATP = L-glutamyl-tRNA(Glu) + AMP + diphosphate. Catalyzes the attachment of glutamate to tRNA(Glu) in a two-step reaction: glutamate is first activated by ATP to form Glu-AMP and then transferred to the acceptor end of tRNA(Glu). The sequence is that of Glutamate--tRNA ligase from Ureaplasma urealyticum serovar 10 (strain ATCC 33699 / Western).